An 884-amino-acid chain; its full sequence is Telomerase reverse transcriptase (884 aa).

Positions 422 to 725 (CRNHNSYTLS…TVIQFCAMHI (304 aa)) constitute a Reverse transcriptase domain. Mg(2+)-binding residues include D530, D670, and D671.

It belongs to the reverse transcriptase family. Telomerase subfamily. In terms of assembly, catalytic subunit of the telomerase holoenzyme complex composed minimally of EST2 and the telomerase RNA template component.

The protein resides in the nucleus. It is found in the chromosome. It localises to the telomere. It catalyses the reaction DNA(n) + a 2'-deoxyribonucleoside 5'-triphosphate = DNA(n+1) + diphosphate. Telomerase is a ribonucleoprotein enzyme essential for the replication of chromosome termini in most eukaryotes. It elongates telomeres. It is a reverse transcriptase that adds simple sequence repeats to chromosome ends by copying a template sequence within the RNA component of the enzyme. This chain is Telomerase reverse transcriptase (EST2), found in Saccharomyces cerevisiae (strain ATCC 204508 / S288c) (Baker's yeast).